The primary structure comprises 308 residues: Acetyl-coenzyme A carboxylase carboxyl transferase subunit beta (308 aa).

Positions 46–308 (LWVKCPDTGE…LMMGRGLKAA (263 aa)) constitute a CoA carboxyltransferase N-terminal domain.

Belongs to the AccD/PCCB family. Acetyl-CoA carboxylase is a heterohexamer composed of biotin carboxyl carrier protein (AccB), biotin carboxylase (AccC) and two subunits each of ACCase subunit alpha (AccA) and ACCase subunit beta (AccD).

Its subcellular location is the cytoplasm. The enzyme catalyses N(6)-carboxybiotinyl-L-lysyl-[protein] + acetyl-CoA = N(6)-biotinyl-L-lysyl-[protein] + malonyl-CoA. It participates in lipid metabolism; malonyl-CoA biosynthesis; malonyl-CoA from acetyl-CoA: step 1/1. In terms of biological role, component of the acetyl coenzyme A carboxylase (ACC) complex. Biotin carboxylase (BC) catalyzes the carboxylation of biotin on its carrier protein (BCCP) and then the CO(2) group is transferred by the transcarboxylase to acetyl-CoA to form malonyl-CoA. The sequence is that of Acetyl-coenzyme A carboxylase carboxyl transferase subunit beta from Caulobacter sp. (strain K31).